The sequence spans 415 residues: Actin-like protein 9 (415 aa).

The segment at 1 to 22 (MDVNGHPKFQPSPETDGPLPLT) is disordered.

It belongs to the actin family. As to quaternary structure, interacts with ACTL7A.

It localises to the cytoplasmic vesicle. The protein resides in the secretory vesicle. Its subcellular location is the acrosome. It is found in the cytoplasm. The protein localises to the cytoskeleton. It localises to the perinuclear theca. Testis-specic protein that plays an important role in fusion of proacrosomal vesicles and perinuclear theca formation. This Mus musculus (Mouse) protein is Actin-like protein 9 (Actl9).